The sequence spans 262 residues: Thiazole synthase (262 aa).

The active-site Schiff-base intermediate with DXP is lysine 98. Residues glycine 159, alanine 186–glycine 187, and asparagine 208–threonine 209 each bind 1-deoxy-D-xylulose 5-phosphate.

The protein belongs to the ThiG family. As to quaternary structure, homotetramer. Forms heterodimers with either ThiH or ThiS.

The protein resides in the cytoplasm. The enzyme catalyses [ThiS sulfur-carrier protein]-C-terminal-Gly-aminoethanethioate + 2-iminoacetate + 1-deoxy-D-xylulose 5-phosphate = [ThiS sulfur-carrier protein]-C-terminal Gly-Gly + 2-[(2R,5Z)-2-carboxy-4-methylthiazol-5(2H)-ylidene]ethyl phosphate + 2 H2O + H(+). It functions in the pathway cofactor biosynthesis; thiamine diphosphate biosynthesis. In terms of biological role, catalyzes the rearrangement of 1-deoxy-D-xylulose 5-phosphate (DXP) to produce the thiazole phosphate moiety of thiamine. Sulfur is provided by the thiocarboxylate moiety of the carrier protein ThiS. In vitro, sulfur can be provided by H(2)S. The polypeptide is Thiazole synthase (Hahella chejuensis (strain KCTC 2396)).